We begin with the raw amino-acid sequence, 273 residues long: Putative pyruvate, phosphate dikinase regulatory protein (273 aa).

153–160 (GISRTSKT) lines the ADP pocket.

Belongs to the pyruvate, phosphate/water dikinase regulatory protein family. PDRP subfamily.

It catalyses the reaction N(tele)-phospho-L-histidyl/L-threonyl-[pyruvate, phosphate dikinase] + ADP = N(tele)-phospho-L-histidyl/O-phospho-L-threonyl-[pyruvate, phosphate dikinase] + AMP + H(+). The enzyme catalyses N(tele)-phospho-L-histidyl/O-phospho-L-threonyl-[pyruvate, phosphate dikinase] + phosphate + H(+) = N(tele)-phospho-L-histidyl/L-threonyl-[pyruvate, phosphate dikinase] + diphosphate. Functionally, bifunctional serine/threonine kinase and phosphorylase involved in the regulation of the pyruvate, phosphate dikinase (PPDK) by catalyzing its phosphorylation/dephosphorylation. This Rhizobium johnstonii (strain DSM 114642 / LMG 32736 / 3841) (Rhizobium leguminosarum bv. viciae) protein is Putative pyruvate, phosphate dikinase regulatory protein.